We begin with the raw amino-acid sequence, 255 residues long: Thiazole synthase (255 aa).

Lys97 serves as the catalytic Schiff-base intermediate with DXP. 1-deoxy-D-xylulose 5-phosphate contacts are provided by residues Gly158, 184-185, and 206-207; these read AG and NT.

Belongs to the ThiG family. As to quaternary structure, homotetramer. Forms heterodimers with either ThiH or ThiS.

Its subcellular location is the cytoplasm. It carries out the reaction [ThiS sulfur-carrier protein]-C-terminal-Gly-aminoethanethioate + 2-iminoacetate + 1-deoxy-D-xylulose 5-phosphate = [ThiS sulfur-carrier protein]-C-terminal Gly-Gly + 2-[(2R,5Z)-2-carboxy-4-methylthiazol-5(2H)-ylidene]ethyl phosphate + 2 H2O + H(+). The protein operates within cofactor biosynthesis; thiamine diphosphate biosynthesis. In terms of biological role, catalyzes the rearrangement of 1-deoxy-D-xylulose 5-phosphate (DXP) to produce the thiazole phosphate moiety of thiamine. Sulfur is provided by the thiocarboxylate moiety of the carrier protein ThiS. In vitro, sulfur can be provided by H(2)S. The protein is Thiazole synthase of Moorella thermoacetica (strain ATCC 39073 / JCM 9320).